The chain runs to 289 residues: Serine/threonine-protein phosphatase PGAM5, mitochondrial (289 aa).

At 1–6 (MAFRQA) the chain is on the mitochondrial matrix side. The helical transmembrane segment at 7 to 29 (LQLAACGLAGGSAAVLFSAVAVG) threads the bilayer. The Mitochondrial intermembrane portion of the chain corresponds to 30–289 (KPRAGGDAEP…FMPPDKITRS (260 aa)). Residues 32–59 (RAGGDAEPRPAEPPAWAGGARPGPGVWD) are disordered. Positions 45-56 (PAWAGGARPGPG) are enriched in low complexity. Positions 77–82 (NVESGE) are interaction with KEAP1. S80 and S87 each carry phosphoserine. Residues K116, K144, and K191 each carry the N6-acetyllysine modification.

This sequence belongs to the phosphoglycerate mutase family. BPG-dependent PGAM subfamily. Dimer. Forms a ternary complex with NFE2L2 and KEAP1. Interacts with BCL2L1 and MAP3K5. Upon TNF-induced necrosis, forms in complex with RIPK1, RIPK3 and MLKL; the formation of this complex leads to PGAM5 phosphorylation. Isoform 2, but not isoform 1, interacts with DNM1L; this interaction leads to DNM1L dephosphorylation and activation and eventually to mitochondria fragmentation. In terms of processing, both isoform 1 and isoform 2 are phosphorylated by the RIPK1/RIPK3 complex under necrotic conditions. This phosphorylation increases PGAM5 phosphatase activity. Post-translationally, proteolytically cleaved by PARL in response to loss of mitochondrial membrane potential.

It localises to the mitochondrion outer membrane. The protein localises to the mitochondrion inner membrane. The enzyme catalyses O-phospho-L-seryl-[protein] + H2O = L-seryl-[protein] + phosphate. It carries out the reaction O-phospho-L-threonyl-[protein] + H2O = L-threonyl-[protein] + phosphate. In terms of biological role, mitochondrial serine/threonine phosphatase that dephosphorylates various substrates and thus plays a role in different biological processes including cellular senescence or mitophagy. Modulates cellular senescence by regulating mitochondrial dynamics. Mechanistically, participates in mitochondrial fission through dephosphorylating DNM1L/DRP1. Additionally, dephosphorylates MFN2 in a stress-sensitive manner and consequently protects it from ubiquitination and degradation to promote mitochondrial network formation. Regulates mitophagy independent of PARKIN by interacting with and dephosphorylating FUNDC1, which interacts with LC3. Regulates anti-oxidative response by forming a tertiary complex with KEAP1 and NRF2. Regulates necroptosis by acting as a RIPK3 target and recruiting the RIPK1-RIPK3-MLKL necrosis 'attack' complex to mitochondria. The sequence is that of Serine/threonine-protein phosphatase PGAM5, mitochondrial (PGAM5) from Homo sapiens (Human).